The chain runs to 770 residues: uncharacterized protein (770 aa).

Residues M1–A24 form the signal peptide. N-linked (GlcNAc...) asparagine glycosylation is found at N78, N204, N533, and N638. The segment at S746–T770 is disordered.

It belongs to the glycosyl hydrolase 92 family.

It localises to the secreted. This is an uncharacterized protein from Arthroderma benhamiae (strain ATCC MYA-4681 / CBS 112371) (Trichophyton mentagrophytes).